We begin with the raw amino-acid sequence, 223 residues long: Urease accessory protein UreF (223 aa).

Belongs to the UreF family. UreD, UreF and UreG form a complex that acts as a GTP-hydrolysis-dependent molecular chaperone, activating the urease apoprotein by helping to assemble the nickel containing metallocenter of UreC. The UreE protein probably delivers the nickel.

Its subcellular location is the cytoplasm. Its function is as follows. Required for maturation of urease via the functional incorporation of the urease nickel metallocenter. This chain is Urease accessory protein UreF, found in Sinorhizobium medicae (strain WSM419) (Ensifer medicae).